Here is a 124-residue protein sequence, read N- to C-terminus: Alpha-amylase inhibitor 0.19 (124 aa).

5 disulfide bridges follow: Cys6-Cys52, Cys20-Cys41, Cys28-Cys83, Cys42-Cys99, and Cys54-Cys115.

The protein belongs to the protease inhibitor I6 (cereal trypsin/alpha-amylase inhibitor) family. In terms of assembly, homodimer. Post-translationally, the disulfide bonds are essential for the inhibitor activity. As to expression, endosperm.

It is found in the secreted. Functionally, alpha-amylase inhibitor. In Triticum aestivum (Wheat), this protein is Alpha-amylase inhibitor 0.19.